We begin with the raw amino-acid sequence, 417 residues long: NADH-quinone oxidoreductase subunit D (417 aa).

It belongs to the complex I 49 kDa subunit family. In terms of assembly, NDH-1 is composed of 14 different subunits. Subunits NuoB, C, D, E, F, and G constitute the peripheral sector of the complex.

Its subcellular location is the cell inner membrane. The enzyme catalyses a quinone + NADH + 5 H(+)(in) = a quinol + NAD(+) + 4 H(+)(out). In terms of biological role, NDH-1 shuttles electrons from NADH, via FMN and iron-sulfur (Fe-S) centers, to quinones in the respiratory chain. The immediate electron acceptor for the enzyme in this species is believed to be ubiquinone. Couples the redox reaction to proton translocation (for every two electrons transferred, four hydrogen ions are translocated across the cytoplasmic membrane), and thus conserves the redox energy in a proton gradient. The chain is NADH-quinone oxidoreductase subunit D from Paraburkholderia phymatum (strain DSM 17167 / CIP 108236 / LMG 21445 / STM815) (Burkholderia phymatum).